The primary structure comprises 565 residues: Genetic interactor of prohibitins 3, mitochondrial (565 aa).

The CP-type G domain occupies 129–315 (TDVLEKIPRG…IYDLPGFTTN (187 aa)).

This sequence belongs to the TRAFAC class YlqF/YawG GTPase family. GEP3 subfamily.

The protein resides in the mitochondrion. May be involved in the mitochondrial lipid metabolism. The sequence is that of Genetic interactor of prohibitins 3, mitochondrial (GEP3) from Zygosaccharomyces rouxii (strain ATCC 2623 / CBS 732 / NBRC 1130 / NCYC 568 / NRRL Y-229).